We begin with the raw amino-acid sequence, 145 residues long: Ribonuclease P protein component (145 aa).

Residues 120-130 (LPAAPGTMPPA) show a composition bias toward low complexity. Residues 120–145 (LPAAPGTMPPARTMHPSSLSPTEPDL) form a disordered region. The span at 134 to 145 (HPSSLSPTEPDL) shows a compositional bias: polar residues.

It belongs to the RnpA family. Consists of a catalytic RNA component (M1 or rnpB) and a protein subunit.

The catalysed reaction is Endonucleolytic cleavage of RNA, removing 5'-extranucleotides from tRNA precursor.. In terms of biological role, RNaseP catalyzes the removal of the 5'-leader sequence from pre-tRNA to produce the mature 5'-terminus. It can also cleave other RNA substrates such as 4.5S RNA. The protein component plays an auxiliary but essential role in vivo by binding to the 5'-leader sequence and broadening the substrate specificity of the ribozyme. The protein is Ribonuclease P protein component of Xanthomonas oryzae pv. oryzae (strain MAFF 311018).